A 210-amino-acid polypeptide reads, in one-letter code: Orotate phosphoribosyltransferase (210 aa).

Residues Arg-96, Lys-100, His-102, and 122–130 each bind 5-phospho-alpha-D-ribose 1-diphosphate; that span reads EDLISTGGS. Ser-126 is a binding site for orotate.

This sequence belongs to the purine/pyrimidine phosphoribosyltransferase family. PyrE subfamily. As to quaternary structure, homodimer. Mg(2+) serves as cofactor.

The enzyme catalyses orotidine 5'-phosphate + diphosphate = orotate + 5-phospho-alpha-D-ribose 1-diphosphate. Its pathway is pyrimidine metabolism; UMP biosynthesis via de novo pathway; UMP from orotate: step 1/2. Its function is as follows. Catalyzes the transfer of a ribosyl phosphate group from 5-phosphoribose 1-diphosphate to orotate, leading to the formation of orotidine monophosphate (OMP). The polypeptide is Orotate phosphoribosyltransferase (Streptococcus pneumoniae serotype 4 (strain ATCC BAA-334 / TIGR4)).